The following is a 206-amino-acid chain: Probable glutathione S-transferase 8 (206 aa).

The region spanning 2 to 79 (VHYKLSYFPI…FLARQFGING (78 aa)) is the GST N-terminal domain. Residues tyrosine 8, tryptophan 39, lysine 43, 49 to 51 (GQL), and 63 to 64 (QS) contribute to the glutathione site. One can recognise a GST C-terminal domain in the interval 81–206 (CAWEEAQVNS…WLETRPETQF (126 aa)).

Belongs to the GST superfamily. Sigma family.

It carries out the reaction RX + glutathione = an S-substituted glutathione + a halide anion + H(+). Functionally, conjugation of reduced glutathione to a wide number of exogenous and endogenous hydrophobic electrophiles. In Caenorhabditis elegans, this protein is Probable glutathione S-transferase 8 (gst-8).